A 191-amino-acid polypeptide reads, in one-letter code: Protein GrpE (191 aa).

Over residues methionine 1–glutamate 11 the composition is skewed to basic and acidic residues. 2 disordered regions span residues methionine 1–isoleucine 22 and lysine 172–glutamate 191.

This sequence belongs to the GrpE family. In terms of assembly, homodimer.

Its subcellular location is the cytoplasm. In terms of biological role, participates actively in the response to hyperosmotic and heat shock by preventing the aggregation of stress-denatured proteins, in association with DnaK and GrpE. It is the nucleotide exchange factor for DnaK and may function as a thermosensor. Unfolded proteins bind initially to DnaJ; upon interaction with the DnaJ-bound protein, DnaK hydrolyzes its bound ATP, resulting in the formation of a stable complex. GrpE releases ADP from DnaK; ATP binding to DnaK triggers the release of the substrate protein, thus completing the reaction cycle. Several rounds of ATP-dependent interactions between DnaJ, DnaK and GrpE are required for fully efficient folding. This chain is Protein GrpE, found in Chlamydia abortus (strain DSM 27085 / S26/3) (Chlamydophila abortus).